The following is a 64-amino-acid chain: Alpha-conotoxin CnIC (64 aa).

The N-terminal stretch at 1-21 (MGMRMMFTVFLLVVLTTTVVS) is a signal peptide. Residues 22–47 (FPSDSASDVRDDEAKDERSDMYKSKR) constitute a propeptide that is removed on maturation. The residue at position 48 (Asn-48) is a Deamidated asparagine; in CnIH; partial. 2 disulfide bridges follow: Cys-51/Cys-56 and Cys-52/Cys-62. Cys-62 is subject to Cysteine amide.

It belongs to the conotoxin A superfamily. In terms of tissue distribution, expressed by the venom duct.

It is found in the secreted. In terms of biological role, alpha-conotoxins act on postsynaptic membranes, they bind to the nicotinic acetylcholine receptors (nAChR) and thus inhibit them. The sequence is that of Alpha-conotoxin CnIC from Conus consors (Singed cone).